Reading from the N-terminus, the 485-residue chain is Probable outer membrane usher protein LpfC' (485 aa).

It belongs to the fimbrial export usher family.

Its subcellular location is the cell outer membrane. In terms of biological role, part of the lpfABCC'DE fimbrial operon. LP fimbriae may participate in the interaction with eukaryotic cells by assisting in microcolony formation. Could be involved in the export and assembly of the fimbrial subunits across the outer membrane. The polypeptide is Probable outer membrane usher protein LpfC' (lpfC') (Escherichia coli O157:H7).